The primary structure comprises 192 residues: Imidazoleglycerol-phosphate dehydratase (192 aa).

It belongs to the imidazoleglycerol-phosphate dehydratase family.

Its subcellular location is the cytoplasm. The enzyme catalyses D-erythro-1-(imidazol-4-yl)glycerol 3-phosphate = 3-(imidazol-4-yl)-2-oxopropyl phosphate + H2O. The protein operates within amino-acid biosynthesis; L-histidine biosynthesis; L-histidine from 5-phospho-alpha-D-ribose 1-diphosphate: step 6/9. The polypeptide is Imidazoleglycerol-phosphate dehydratase (Caldivirga maquilingensis (strain ATCC 700844 / DSM 13496 / JCM 10307 / IC-167)).